A 191-amino-acid chain; its full sequence is Cell division protein SepF (191 aa).

Residues 151–164 (SSSPEEASPSSVST) show a composition bias toward low complexity. The tract at residues 151 to 191 (SSSPEEASPSSVSTEKTPQYSLGKNTTPEPAWGNSKLSAYS) is disordered. The segment covering 165–178 (EKTPQYSLGKNTTP) has biased composition (polar residues).

Belongs to the SepF family. In terms of assembly, homodimer. Interacts with FtsZ.

The protein localises to the cytoplasm. Its function is as follows. Cell division protein that is part of the divisome complex and is recruited early to the Z-ring. Probably stimulates Z-ring formation, perhaps through the cross-linking of FtsZ protofilaments. Its function overlaps with FtsA. The polypeptide is Cell division protein SepF (Prochlorococcus marinus (strain MIT 9301)).